The following is a 164-amino-acid chain: Protein SprT (164 aa).

Residues 14 to 156 (QLAESFFKRP…LCRRCRQTLV (143 aa)) enclose the SprT-like domain. His-69 is a Zn(2+) binding site. Residue Glu-70 is part of the active site. His-73 serves as a coordination point for Zn(2+).

This sequence belongs to the SprT family. It depends on Zn(2+) as a cofactor.

The protein resides in the cytoplasm. The sequence is that of Protein SprT from Pseudomonas fluorescens (strain ATCC BAA-477 / NRRL B-23932 / Pf-5).